Consider the following 257-residue polypeptide: 5-oxoprolinase subunit A (257 aa).

It belongs to the LamB/PxpA family. Forms a complex composed of PxpA, PxpB and PxpC.

The catalysed reaction is 5-oxo-L-proline + ATP + 2 H2O = L-glutamate + ADP + phosphate + H(+). Catalyzes the cleavage of 5-oxoproline to form L-glutamate coupled to the hydrolysis of ATP to ADP and inorganic phosphate. This chain is 5-oxoprolinase subunit A, found in Oceanobacillus iheyensis (strain DSM 14371 / CIP 107618 / JCM 11309 / KCTC 3954 / HTE831).